The chain runs to 355 residues: Peptide chain release factor 1 (355 aa).

The residue at position 233 (glutamine 233) is an N5-methylglutamine.

It belongs to the prokaryotic/mitochondrial release factor family. Post-translationally, methylated by PrmC. Methylation increases the termination efficiency of RF1.

Its subcellular location is the cytoplasm. Its function is as follows. Peptide chain release factor 1 directs the termination of translation in response to the peptide chain termination codons UAG and UAA. This is Peptide chain release factor 1 from Caldicellulosiruptor saccharolyticus (strain ATCC 43494 / DSM 8903 / Tp8T 6331).